The primary structure comprises 147 residues: UPF0306 protein YhbP (147 aa).

This sequence belongs to the UPF0306 family.

The chain is UPF0306 protein YhbP from Escherichia coli O7:K1 (strain IAI39 / ExPEC).